The chain runs to 347 residues: Probable dual-specificity RNA methyltransferase RlmN (347 aa).

Glu93 functions as the Proton acceptor in the catalytic mechanism. The Radical SAM core domain occupies 99–333 (TEKRLTACLS…VSLRKSRGLD (235 aa)). Cys106 and Cys338 form a disulfide bridge. [4Fe-4S] cluster-binding residues include Cys113, Cys117, and Cys120. S-adenosyl-L-methionine is bound by residues 160 to 161 (GE), Ser190, 219 to 221 (SLH), and Asn295. Cys338 acts as the S-methylcysteine intermediate in catalysis.

It belongs to the radical SAM superfamily. RlmN family. [4Fe-4S] cluster serves as cofactor.

The protein resides in the cytoplasm. The enzyme catalyses adenosine(2503) in 23S rRNA + 2 reduced [2Fe-2S]-[ferredoxin] + 2 S-adenosyl-L-methionine = 2-methyladenosine(2503) in 23S rRNA + 5'-deoxyadenosine + L-methionine + 2 oxidized [2Fe-2S]-[ferredoxin] + S-adenosyl-L-homocysteine. It catalyses the reaction adenosine(37) in tRNA + 2 reduced [2Fe-2S]-[ferredoxin] + 2 S-adenosyl-L-methionine = 2-methyladenosine(37) in tRNA + 5'-deoxyadenosine + L-methionine + 2 oxidized [2Fe-2S]-[ferredoxin] + S-adenosyl-L-homocysteine. Its function is as follows. Specifically methylates position 2 of adenine 2503 in 23S rRNA and position 2 of adenine 37 in tRNAs. This is Probable dual-specificity RNA methyltransferase RlmN from Prochlorococcus marinus (strain MIT 9301).